Here is a 220-residue protein sequence, read N- to C-terminus: MOB kinase activator-like 3 (220 aa).

Residues Cys83, Cys88, His165, and His170 each coordinate Zn(2+).

The protein belongs to the MOB1/phocein family.

The chain is MOB kinase activator-like 3 (Mob3) from Drosophila melanogaster (Fruit fly).